The following is a 445-amino-acid chain: Ribosomal protein uS12 methylthiotransferase RimO (445 aa).

The MTTase N-terminal domain occupies 4–119; that stretch reads LKFGLVSLGC…LDDAIEDFFN (116 aa). Residues C13, C48, C82, C156, C160, and C163 each contribute to the [4Fe-4S] cluster site. A Radical SAM core domain is found at 142–372; it reads TTGEYSSYVR…MLIQQQVSKN (231 aa). Residues 375-441 form the TRAM domain; sequence AKKIGKVYKV…EYDLIGVVYN (67 aa).

The protein belongs to the methylthiotransferase family. RimO subfamily. Requires [4Fe-4S] cluster as cofactor.

It is found in the cytoplasm. It carries out the reaction L-aspartate(89)-[ribosomal protein uS12]-hydrogen + (sulfur carrier)-SH + AH2 + 2 S-adenosyl-L-methionine = 3-methylsulfanyl-L-aspartate(89)-[ribosomal protein uS12]-hydrogen + (sulfur carrier)-H + 5'-deoxyadenosine + L-methionine + A + S-adenosyl-L-homocysteine + 2 H(+). In terms of biological role, catalyzes the methylthiolation of an aspartic acid residue of ribosomal protein uS12. The sequence is that of Ribosomal protein uS12 methylthiotransferase RimO from Clostridium acetobutylicum (strain ATCC 824 / DSM 792 / JCM 1419 / IAM 19013 / LMG 5710 / NBRC 13948 / NRRL B-527 / VKM B-1787 / 2291 / W).